Reading from the N-terminus, the 326-residue chain is tRNA-modifying protein YgfZ (326 aa).

Residues Trp-27 and Trp-189 each coordinate folate.

The protein belongs to the tRNA-modifying YgfZ family.

The protein localises to the cytoplasm. Its function is as follows. Folate-binding protein involved in regulating the level of ATP-DnaA and in the modification of some tRNAs. It is probably a key factor in regulatory networks that act via tRNA modification, such as initiation of chromosomal replication. This chain is tRNA-modifying protein YgfZ, found in Escherichia fergusonii (strain ATCC 35469 / DSM 13698 / CCUG 18766 / IAM 14443 / JCM 21226 / LMG 7866 / NBRC 102419 / NCTC 12128 / CDC 0568-73).